Reading from the N-terminus, the 193-residue chain is Homeobox protein HD-12 (193 aa).

A DNA-binding region (homeobox; TALE-type) is located at residues 123–185 (SVIRRINFPK…NARRRILPFM (63 aa)).

The protein belongs to the TALE/KNOX homeobox family.

It is found in the nucleus. This Encephalitozoon cuniculi (strain GB-M1) (Microsporidian parasite) protein is Homeobox protein HD-12 (HD-12).